The sequence spans 78 residues: Large ribosomal subunit protein bL28 (78 aa).

The protein belongs to the bacterial ribosomal protein bL28 family.

The protein is Large ribosomal subunit protein bL28 of Leifsonia xyli subsp. xyli (strain CTCB07).